A 392-amino-acid chain; its full sequence is Formate-dependent phosphoribosylglycinamide formyltransferase (392 aa).

N(1)-(5-phospho-beta-D-ribosyl)glycinamide is bound by residues 15-16 (EL) and glutamate 75. ATP contacts are provided by residues arginine 107, lysine 148, 153 to 158 (SSGKGQ), 188 to 191 (EEFL), and glutamate 196. Residues 112 to 302 (DLAAGELNLR…EFELHLRAVL (191 aa)) form the ATP-grasp domain. Glutamate 261 and glutamate 273 together coordinate Mg(2+). Residues aspartate 280, lysine 350, and 357–358 (RR) each bind N(1)-(5-phospho-beta-D-ribosyl)glycinamide.

The protein belongs to the PurK/PurT family. Homodimer.

The catalysed reaction is N(1)-(5-phospho-beta-D-ribosyl)glycinamide + formate + ATP = N(2)-formyl-N(1)-(5-phospho-beta-D-ribosyl)glycinamide + ADP + phosphate + H(+). It functions in the pathway purine metabolism; IMP biosynthesis via de novo pathway; N(2)-formyl-N(1)-(5-phospho-D-ribosyl)glycinamide from N(1)-(5-phospho-D-ribosyl)glycinamide (formate route): step 1/1. In terms of biological role, involved in the de novo purine biosynthesis. Catalyzes the transfer of formate to 5-phospho-ribosyl-glycinamide (GAR), producing 5-phospho-ribosyl-N-formylglycinamide (FGAR). Formate is provided by PurU via hydrolysis of 10-formyl-tetrahydrofolate. The sequence is that of Formate-dependent phosphoribosylglycinamide formyltransferase from Synechococcus sp. (strain CC9605).